The primary structure comprises 350 residues: MNILGIETSCDETSGAVLCSGQVRSNVVSSQRCHAHFGGVVPELASREHERLIVSIVDAAVTEANITKNDLDVIAATAGPGLIGAVMVGLCFAQGMAYALQIPFVPVNHIEAHIFSPFIQEDPFHSSPEGAFVSLTVSGGHTLLSVVEPDLSYSVIGRTLDDAAGEAFDKTGKMLGLPYPAGPVIDKLAEKGDPAFHLFPRALTSKSQTSKNYLGNFDFSFSGLKTSVLTWLQKQSAEFIEHHKADIAASIQYAIVSVLVEKTIAAARSRGIKSVSIAGGVSANSALRRAMKEACKREGITLHVPGTVYSTDNAAMIATLAALKLSRGMKAECCYNIAPYASFAAGSRMA.

Fe cation contacts are provided by histidine 109 and histidine 113. Residues 136–140 (TVSGG), aspartate 169, glycine 182, aspartate 186, and asparagine 284 contribute to the substrate site. Aspartate 312 serves as a coordination point for Fe cation.

Belongs to the KAE1 / TsaD family. Fe(2+) is required as a cofactor.

It localises to the cytoplasm. The enzyme catalyses L-threonylcarbamoyladenylate + adenosine(37) in tRNA = N(6)-L-threonylcarbamoyladenosine(37) in tRNA + AMP + H(+). Its function is as follows. Required for the formation of a threonylcarbamoyl group on adenosine at position 37 (t(6)A37) in tRNAs that read codons beginning with adenine. Is involved in the transfer of the threonylcarbamoyl moiety of threonylcarbamoyl-AMP (TC-AMP) to the N6 group of A37, together with TsaE and TsaB. TsaD likely plays a direct catalytic role in this reaction. The chain is tRNA N6-adenosine threonylcarbamoyltransferase from Pelodictyon phaeoclathratiforme (strain DSM 5477 / BU-1).